Consider the following 162-residue polypeptide: Phosphopantetheine adenylyltransferase (162 aa).

Position 9 (S9) interacts with substrate. ATP contacts are provided by residues 9–10 (SF) and H17. Substrate contacts are provided by K41, L77, and K91. Residues 92–94 (GLR), E102, and 126–132 (YAFLSSS) contribute to the ATP site.

This sequence belongs to the bacterial CoaD family. As to quaternary structure, homohexamer. Requires Mg(2+) as cofactor.

It localises to the cytoplasm. The enzyme catalyses (R)-4'-phosphopantetheine + ATP + H(+) = 3'-dephospho-CoA + diphosphate. The protein operates within cofactor biosynthesis; coenzyme A biosynthesis; CoA from (R)-pantothenate: step 4/5. Functionally, reversibly transfers an adenylyl group from ATP to 4'-phosphopantetheine, yielding dephospho-CoA (dPCoA) and pyrophosphate. The protein is Phosphopantetheine adenylyltransferase of Parafrankia sp. (strain EAN1pec).